Reading from the N-terminus, the 471-residue chain is Tumor necrosis factor receptor superfamily member 1A (471 aa).

Residues 1 to 29 (MGLPTVPGLLLPLVLPALLADVYPAGVQG) form the signal peptide. Over 30 to 210 (LVPHPGDLEK…GKDSQDPGTT (181 aa)) the chain is Extracellular. 4 TNFR-Cys repeats span residues 43–82 (PCPQGKYNHPQNSTICCTKCHKGTYLYNDCPGPGRDTDCR), 83–125 (VCAP…DTVC), 126–166 (GCRK…DTIC), and 167–195 (HCHMGFFLKGAKCISCHDCKNKECEKLCP). Intrachain disulfides connect Cys-44-Cys-58, Cys-59-Cys-72, Cys-62-Cys-81, Cys-84-Cys-99, Cys-102-Cys-117, Cys-105-Cys-125, and Cys-127-Cys-143. Asn-54 is a glycosylation site (N-linked (GlcNAc...) asparagine). N-linked (GlcNAc...) asparagine glycans are attached at residues Asn-145 and Asn-151. 5 disulfides stabilise this stretch: Cys-146-Cys-158, Cys-149-Cys-166, Cys-168-Cys-179, Cys-182-Cys-194, and Cys-185-Cys-190. A helical transmembrane segment spans residues 211-233 (VLLPLVIVFGLCLASFASVVLAC). The Cytoplasmic segment spans residues 234 to 471 (RYQRWKPKLY…RLASEPRLLW (238 aa)). An N-SMase activation domain (NSD) region spans residues 340 to 360 (TPGPPASTHLCTPVQKWEASA). Residues 372-457 (PATLYAVVDG…GCLENIEEAL (86 aa)) form the Death domain.

In terms of assembly, binding of TNF to the extracellular domain leads to homotrimerization. The aggregated death domains provide a novel molecular interface that interacts specifically with the death domain of TRADD. Various TRADD-interacting proteins such as TRAFS, RIPK1 and possibly FADD, are recruited to the complex by their association with TRADD. This complex activates at least two distinct signaling cascades, apoptosis and NF-kappa-B signaling. Interacts with BAG4, BABAM2, FEM1B, GRB2, SQSTM1 and TRPC4AP. Interacts directly with NOL3 (via CARD domain); inhibits TNF-signaling pathway. Interacts with SH3RF2, TRADD and RIPK1. SH3RF2 facilitates the recruitment of RIPK1 and TRADD to TNFRSF1A in a TNF-alpha-dependent process. Interacts with PGLYRP1; this interaction is important for cell death induction. Interacts (via death domain) with MADD (via death domain).

It is found in the cell membrane. The protein resides in the golgi apparatus membrane. In terms of biological role, receptor for TNFSF2/TNF-alpha and homotrimeric TNFSF1/lymphotoxin-alpha. The adapter molecule FADD recruits caspase-8 to the activated receptor. The resulting death-inducing signaling complex (DISC) performs caspase-8 proteolytic activation which initiates the subsequent cascade of caspases (aspartate-specific cysteine proteases) mediating apoptosis. This Bos taurus (Bovine) protein is Tumor necrosis factor receptor superfamily member 1A (TNFRSF1A).